We begin with the raw amino-acid sequence, 91 residues long: Probable Fe(2+)-trafficking protein (91 aa).

The protein belongs to the Fe(2+)-trafficking protein family.

Functionally, could be a mediator in iron transactions between iron acquisition and iron-requiring processes, such as synthesis and/or repair of Fe-S clusters in biosynthetic enzymes. The chain is Probable Fe(2+)-trafficking protein from Shewanella amazonensis (strain ATCC BAA-1098 / SB2B).